The sequence spans 390 residues: Lipid-A-disaccharide synthase (390 aa).

It belongs to the LpxB family.

It carries out the reaction a lipid X + a UDP-2-N,3-O-bis[(3R)-3-hydroxyacyl]-alpha-D-glucosamine = a lipid A disaccharide + UDP + H(+). Its pathway is bacterial outer membrane biogenesis; LPS lipid A biosynthesis. In terms of biological role, condensation of UDP-2,3-diacylglucosamine and 2,3-diacylglucosamine-1-phosphate to form lipid A disaccharide, a precursor of lipid A, a phosphorylated glycolipid that anchors the lipopolysaccharide to the outer membrane of the cell. The sequence is that of Lipid-A-disaccharide synthase from Haemophilus influenzae (strain PittEE).